We begin with the raw amino-acid sequence, 360 residues long: Peptide chain release factor 1 (360 aa).

At Gln235 the chain carries N5-methylglutamine.

It belongs to the prokaryotic/mitochondrial release factor family. Post-translationally, methylated by PrmC. Methylation increases the termination efficiency of RF1.

The protein resides in the cytoplasm. Functionally, peptide chain release factor 1 directs the termination of translation in response to the peptide chain termination codons UAG and UAA. This chain is Peptide chain release factor 1, found in Burkholderia thailandensis (strain ATCC 700388 / DSM 13276 / CCUG 48851 / CIP 106301 / E264).